Reading from the N-terminus, the 159-residue chain is MATLTIEELAQTLQPAQAIAGLDLGTKTIGLAMSDLSRRFATPRPVIKRVKFTQDAQVLLAFAEKEKVAAFVIGLPINMDGSAGPRAQATRAFVRTMGEKTALPFIYWDERLSTVAAERALLEMDVSRAKRAERIDSAAASFILQGALDRLSALTRAAD.

Belongs to the YqgF nuclease family.

It localises to the cytoplasm. Functionally, could be a nuclease involved in processing of the 5'-end of pre-16S rRNA. The chain is Putative pre-16S rRNA nuclease from Agrobacterium fabrum (strain C58 / ATCC 33970) (Agrobacterium tumefaciens (strain C58)).